The primary structure comprises 100 residues: Serine protease inhibitor 1 protein (100 aa).

A signal peptide spans 1–20 (MKHLLIVSLVFVTIIWKIEC). 5 cysteine pairs are disulfide-bonded: Cys42–Cys74, Cys51–Cys69, Cys54–Cys65, Cys58–Cys93, and Cys76–Cys90. The TIL domain maps to 42 to 93 (CGLNEVWMVCSSCEEECGKTPQPCPRICQPARCQCPAHKGYRRDGQGNCIFC).

Its subcellular location is the secreted. The polypeptide is Serine protease inhibitor 1 protein (Caenorhabditis elegans).